Here is a 47-residue protein sequence, read N- to C-terminus: uncharacterized protein (47 aa).

The first 25 residues, 1-25, serve as a signal peptide directing secretion; the sequence is MAHKCASAKLLSGIMALLFNGKSLL.

This is an uncharacterized protein from Saccharomyces cerevisiae (strain ATCC 204508 / S288c) (Baker's yeast).